The chain runs to 76 residues: DNA-directed RNA polymerase subunit epsilon (76 aa).

Belongs to the RNA polymerase subunit epsilon family. As to quaternary structure, RNAP is composed of a core of 2 alpha, a beta and a beta' subunit. The core is associated with a delta subunit, and at least one of epsilon or omega. When a sigma factor is associated with the core the holoenzyme is formed, which can initiate transcription.

It catalyses the reaction RNA(n) + a ribonucleoside 5'-triphosphate = RNA(n+1) + diphosphate. In terms of biological role, a non-essential component of RNA polymerase (RNAP). This is DNA-directed RNA polymerase subunit epsilon from Lactococcus lactis subsp. cremoris (strain MG1363).